A 614-amino-acid polypeptide reads, in one-letter code: RNA polymerase sigma factor RpoD (614 aa).

Residues 178–222 (THIGSDLSQSERDKDDSKDDSKDDDEDEEEEGPKGPDPEESKERF) are disordered. Residues 186–198 (QSERDKDDSKDDS) show a composition bias toward basic and acidic residues. A compositionally biased stretch (acidic residues) spans 199–208 (KDDDEDEEEE). Residues 209 to 222 (GPKGPDPEESKERF) are compositionally biased toward basic and acidic residues. The segment at 380–450 (MVEANLRLVI…TRSIADQART (71 aa)) is sigma-70 factor domain-2. Residues 404–407 (DLIQ) carry the Interaction with polymerase core subunit RpoC motif. The segment at 459 to 535 (ETINKLNRIS…DTTLELPLDS (77 aa)) is sigma-70 factor domain-3. Residues 548-601 (VLAGLTAREAKVLRMRFGIDMNTDHTLEEVGKQFDVTRERIRQIEAKALRKLRH) are sigma-70 factor domain-4. Positions 574 to 593 (LEEVGKQFDVTRERIRQIEA) form a DNA-binding region, H-T-H motif.

It belongs to the sigma-70 factor family. RpoD/SigA subfamily. In terms of assembly, interacts transiently with the RNA polymerase catalytic core.

Its subcellular location is the cytoplasm. In terms of biological role, sigma factors are initiation factors that promote the attachment of RNA polymerase to specific initiation sites and are then released. This sigma factor is the primary sigma factor during exponential growth. This is RNA polymerase sigma factor RpoD from Shewanella violacea (strain JCM 10179 / CIP 106290 / LMG 19151 / DSS12).